The primary structure comprises 82 residues: ATP synthase subunit c, chloroplastic (82 aa).

2 consecutive transmembrane segments (helical) span residues 7 to 27 (AASV…PGIG) and 57 to 77 (LAFM…LLFA).

Belongs to the ATPase C chain family. In terms of assembly, F-type ATPases have 2 components, F(1) - the catalytic core - and F(0) - the membrane proton channel. F(1) has five subunits: alpha(3), beta(3), gamma(1), delta(1), epsilon(1). F(0) has four main subunits: a(1), b(1), b'(1) and c(10-14). The alpha and beta chains form an alternating ring which encloses part of the gamma chain. F(1) is attached to F(0) by a central stalk formed by the gamma and epsilon chains, while a peripheral stalk is formed by the delta, b and b' chains.

The protein localises to the plastid. It localises to the chloroplast thylakoid membrane. Functionally, f(1)F(0) ATP synthase produces ATP from ADP in the presence of a proton or sodium gradient. F-type ATPases consist of two structural domains, F(1) containing the extramembraneous catalytic core and F(0) containing the membrane proton channel, linked together by a central stalk and a peripheral stalk. During catalysis, ATP synthesis in the catalytic domain of F(1) is coupled via a rotary mechanism of the central stalk subunits to proton translocation. In terms of biological role, key component of the F(0) channel; it plays a direct role in translocation across the membrane. A homomeric c-ring of between 10-14 subunits forms the central stalk rotor element with the F(1) delta and epsilon subunits. This chain is ATP synthase subunit c, chloroplastic, found in Guillardia theta (Cryptophyte).